Consider the following 204-residue polypeptide: Cytochrome c biogenesis ATP-binding export protein CcmA (204 aa).

The region spanning 2–203 (LEADNLECVR…PAGTVRELRL (202 aa)) is the ABC transporter domain. Residue 34–41 (GRNGAGKT) coordinates ATP.

The protein belongs to the ABC transporter superfamily. CcmA exporter (TC 3.A.1.107) family. In terms of assembly, the complex is composed of two ATP-binding proteins (CcmA) and two transmembrane proteins (CcmB).

The protein localises to the cell inner membrane. It carries out the reaction heme b(in) + ATP + H2O = heme b(out) + ADP + phosphate + H(+). Part of the ABC transporter complex CcmAB involved in the biogenesis of c-type cytochromes; once thought to export heme, this seems not to be the case, but its exact role is uncertain. Responsible for energy coupling to the transport system. The chain is Cytochrome c biogenesis ATP-binding export protein CcmA from Dechloromonas aromatica (strain RCB).